Consider the following 497-residue polypeptide: Bypass of stop codon protein 6 (497 aa).

Residues 1–72 (MDASSVPPKV…KVKTYPLNYQ (72 aa)) are Lumenal-facing. Residues S37 and S41 each carry the phosphoserine modification. A glycan (N-linked (GlcNAc...) asparagine) is linked at N49. A helical membrane pass occupies residues 73 to 93 (TVPLVKLQVIACLIMFVVFGM). Residues 94-144 (NDQTVGALLPTLIEYYHISRVDVSNVFIVQLCGYVMASLSKERLNKHFGMR) are Cytoplasmic-facing. A helical membrane pass occupies residues 145–165 (GGMLLAAGLCIVFLIILATAP). At 166 to 167 (SS) the chain is on the lumenal side. A helical membrane pass occupies residues 168–188 (FYVCMFCGLPLGLGIGILDST). Over 189–205 (GNVLMGSLLVHKNELMG) the chain is Cytoplasmic. The chain crosses the membrane as a helical span at residues 206–226 (IMHGLYGAAAMVTPPLVSYFV). The Lumenal portion of the chain corresponds to 227-232 (EWGHWS). Residues 233–253 (LFFLIPLFFSIIGMIVIFPAF) form a helical membrane-spanning segment. The Cytoplasmic segment spans residues 254 to 300 (KFETASKYDYLCSVENKESNNDVEEAGDNSLMESTKASPGFFELLRN). Residues 301–321 (PAIFLYSLYLFLYLGAEITTG) form a helical membrane-spanning segment. The Lumenal segment spans residues 322–340 (SWFFSYLLETKSSNKVAMS). Residues 341–361 (YIAASFWTGLTVGRLCLGFVT) traverse the membrane as a helical segment. The Cytoplasmic segment spans residues 362–373 (ERFFENEYKASK). The chain crosses the membrane as a helical span at residues 374 to 394 (AYAFLTLSSYTLFVLVGLINS). Topologically, residues 395–397 (SSV) are lumenal. The chain crosses the membrane as a helical span at residues 398–418 (FYFVVLFFVVFCCGTFIGPLF). At 419 to 439 (PNASIVALQVLPKRLHVSGVG) the chain is on the cytoplasmic side. Residues 440-460 (VAVAVGGCGGAAIPYLAGVIA) traverse the membrane as a helical segment. Residues 461 to 462 (HT) are Lumenal-facing. The helical transmembrane segment at 463-483 (VGIQYIPLLCWIMVALFTLEW) threads the bilayer. The Cytoplasmic segment spans residues 484-497 (TLYPKFIKGHEEYF).

The protein belongs to the major facilitator superfamily.

The protein resides in the golgi apparatus. It localises to the cis-Golgi network membrane. Its function is as follows. Probable transporter. This is Bypass of stop codon protein 6 (BSC6) from Saccharomyces cerevisiae (strain ATCC 204508 / S288c) (Baker's yeast).